The chain runs to 239 residues: NAD-dependent protein deacylase (239 aa).

Residues 1-239 (MNVLILTGAG…PKLLNHFSAM (239 aa)) form the Deacetylase sirtuin-type domain. 8–27 (GAGISAESGIPTFRDANGLW) is an NAD(+) binding site. Y52 and R55 together coordinate substrate. Residue 93–96 (QNID) participates in NAD(+) binding. Residue H111 is the Proton acceptor of the active site. Residues 182–184 (GTS), 207–209 (NLD), and A225 contribute to the NAD(+) site.

It belongs to the sirtuin family. Class III subfamily.

It is found in the cytoplasm. It catalyses the reaction N(6)-acetyl-L-lysyl-[protein] + NAD(+) + H2O = 2''-O-acetyl-ADP-D-ribose + nicotinamide + L-lysyl-[protein]. It carries out the reaction N(6)-succinyl-L-lysyl-[protein] + NAD(+) + H2O = 2''-O-succinyl-ADP-D-ribose + nicotinamide + L-lysyl-[protein]. Its function is as follows. NAD-dependent lysine deacetylase and desuccinylase that specifically removes acetyl and succinyl groups on target proteins. Modulates the activities of several proteins which are inactive in their acylated form. The protein is NAD-dependent protein deacylase of Rhodopirellula baltica (strain DSM 10527 / NCIMB 13988 / SH1).